The sequence spans 760 residues: Prolyl endopeptidase (760 aa).

Catalysis depends on charge relay system residues Ser-609, Asp-693, and His-730.

The protein belongs to the peptidase S9A family.

Its subcellular location is the cytoplasm. It catalyses the reaction Hydrolysis of Pro-|-Xaa &gt;&gt; Ala-|-Xaa in oligopeptides.. Inhibited by chymostatin, Boc-Glu(NHO-Bz)-Pyrrolidide, Z-Pro-L-prolinal dimethyacetal and the peptide H-H-L-P-P-P-V-OH. Cleaves peptide bonds on the C-terminal side of prolyl residues within peptides that are up to approximately 30 amino acids long. This chain is Prolyl endopeptidase (prep), found in Dictyostelium discoideum (Social amoeba).